The chain runs to 177 residues: Large ribosomal subunit protein uL10 (177 aa).

It belongs to the universal ribosomal protein uL10 family. In terms of assembly, part of the ribosomal stalk of the 50S ribosomal subunit. The N-terminus interacts with L11 and the large rRNA to form the base of the stalk. The C-terminus forms an elongated spine to which L12 dimers bind in a sequential fashion forming a multimeric L10(L12)X complex.

Its function is as follows. Forms part of the ribosomal stalk, playing a central role in the interaction of the ribosome with GTP-bound translation factors. The chain is Large ribosomal subunit protein uL10 from Leptospira borgpetersenii serovar Hardjo-bovis (strain JB197).